Reading from the N-terminus, the 267-residue chain is Regulatory protein VirG (267 aa).

Residues 29 to 143 form the Response regulatory domain; the sequence is HVLLVDDDVA…EFLARIRVAL (115 aa). D78 carries the 4-aspartylphosphate modification. Positions 155–255 form a DNA-binding region, ompR/PhoB-type; that stretch reads RRSFCFTDWT…ARGAGYFFDA (101 aa).

In terms of processing, phosphorylated by wide host range (WHR) VirA protein.

Its subcellular location is the cytoplasm. Its function is as follows. VirG is required for the positive regulation of at least two vir loci encoded by the Ti plasmid of A.tumefaciens. In Agrobacterium tumefaciens (strain 15955), this protein is Regulatory protein VirG (virG).